The following is a 984-amino-acid chain: MORC family CW-type zinc finger protein 1 (984 aa).

The stretch at 284 to 353 (AFKDEVKKAE…RELKTARTLS (70 aa)) forms a coiled coil. The CW-type zinc-finger motif lies at 477 to 531 (AMGIPFIIQCDLCLKWRVLPSSTNYQEKEFFDIWICANNPNRLENSCHQVECLPS). Residues C486, C489, C512, and C523 each contribute to the Zn(2+) site. 2 coiled-coil regions span residues 737–761 (DVSL…CNDV) and 900–934 (EISL…LQLG).

It localises to the nucleus. Functionally, required for spermatogenesis. Essential for de novo DNA methylation and silencing of transposable elements in the male embryonic germ cells. This Homo sapiens (Human) protein is MORC family CW-type zinc finger protein 1.